We begin with the raw amino-acid sequence, 566 residues long: Autophagy-related protein 22-1 (566 aa).

Residues 38 to 58 (YPIAAEVFAVVAVGAFLPVIL) form a helical membrane-spanning segment. Asn103 is a glycosylation site (N-linked (GlcNAc...) asparagine). Helical transmembrane passes span 110–130 (SFAMYTFSAAVIVQAVTLVCF), 146–168 (AFAYTGSVASALFIFISPTVYFL), and 179–199 (SLGCSFVLLNAFLPLLVANHA). Residue Asn200 is glycosylated (N-linked (GlcNAc...) asparagine). 8 helical membrane-spanning segments follow: residues 242-262 (GYGYMAAVFVQVISILILWLF), 278-298 (VILLLVGMWWAALTTPTLLWL), 351-371 (FLISWFLLSDAVATISGTAVL), 382-402 (IAIALLSITSIGSGIIGAFAW), 416-436 (ILLCCVAGMEMIPLYGLLGFI), 451-471 (WEIYPVAVLHGIVMGGVSSYA), 488-510 (FALYAVTDKGSSAFGPALVGWLV), and 519-539 (AFIFLAVLVVLPAPLLWMLDV). A disordered region spans residues 547–566 (KAMADGEGRGRGTYERVREE).

Belongs to the ATG22 family.

The protein resides in the vacuole membrane. In terms of biological role, vacuolar effluxer which mediate the efflux of amino acids resulting from autophagic degradation. The release of autophagic amino acids allows the maintenance of protein synthesis and viability during nitrogen starvation. The polypeptide is Autophagy-related protein 22-1 (ATG22-1) (Phaeosphaeria nodorum (strain SN15 / ATCC MYA-4574 / FGSC 10173) (Glume blotch fungus)).